Here is a 474-residue protein sequence, read N- to C-terminus: UDP-glycosyltransferase 71C2 (474 aa).

UDP-alpha-D-glucose is bound by residues Ser293, Ala352–Gln354, His369–Glu377, and Tyr391–Gln394.

Belongs to the UDP-glycosyltransferase family.

In terms of biological role, possesses low quercetin 3-O-glucosyltransferase, 7-O-glucosyltransferase and 3'-O-glucosyltransferase activities in vitro. Glucosylates other secondary metabolites in vitro like vanillin, trans-resveratrol, curumin and etoposide. This chain is UDP-glycosyltransferase 71C2 (UGT71C2), found in Arabidopsis thaliana (Mouse-ear cress).